The primary structure comprises 221 residues: MKEHVLVILPHPDDESYGVAGLIALNRKKDIPVTYACATLGEMGRNMGDPFFANRETLPLLRKQELINACKEMDINDLRMLGLRDKTLEFEDDEYLADIMEEIIDDVKPSLIVTFYPGHGVHPDHDACGEAVIRALYRKKKEDRPRTICMAITRNREEVLGEADVVLDIKEVADIKMNALRAHRTQTEGMLRELEEKLKNNEPVMATWFEEEIYWTYQWND.

Zn(2+) is bound by residues His11, Asp14, and His125.

This sequence belongs to the PIGL family. Zn(2+) is required as a cofactor.

It catalyses the reaction (S)-malyl N-acetyl-alpha-D-glucosaminide + H2O = (S)-malyl alpha-D-glucosaminide + acetate. Functionally, involved in bacillithiol (BSH) biosynthesis. Catalyzes the second step of the pathway, the deacetylation of N-acetylglucosaminylmalate (GlcNAc-Mal) to glucosamine malate (GlcN-Mal). The sequence is that of Probable N-acetyl-alpha-D-glucosaminyl L-malate deacetylase 2 from Bacillus subtilis (strain 168).